The sequence spans 1045 residues: Isoleucine--tRNA ligase (1045 aa).

A 'HIGH' region motif is present at residues 49–59 (PYCSGRIHLGT). A 'KMSKS' region motif is present at residues 591–595 (KMSKS). Lys594 lines the ATP pocket.

It belongs to the class-I aminoacyl-tRNA synthetase family. IleS type 2 subfamily. Monomer. The cofactor is Zn(2+).

The protein resides in the cytoplasm. The enzyme catalyses tRNA(Ile) + L-isoleucine + ATP = L-isoleucyl-tRNA(Ile) + AMP + diphosphate. Catalyzes the attachment of isoleucine to tRNA(Ile). As IleRS can inadvertently accommodate and process structurally similar amino acids such as valine, to avoid such errors it has two additional distinct tRNA(Ile)-dependent editing activities. One activity is designated as 'pretransfer' editing and involves the hydrolysis of activated Val-AMP. The other activity is designated 'posttransfer' editing and involves deacylation of mischarged Val-tRNA(Ile). In Methanothermobacter marburgensis (strain ATCC BAA-927 / DSM 2133 / JCM 14651 / NBRC 100331 / OCM 82 / Marburg) (Methanobacterium thermoautotrophicum), this protein is Isoleucine--tRNA ligase.